The following is a 326-amino-acid chain: Intracellular serine protease (326 aa).

The Peptidase S8 domain maps to 23-303; sequence PRGVEMIQAP…NGLLYLTAVE (281 aa). Active-site charge relay system residues include Asp-49, His-86, and Ser-244.

This sequence belongs to the peptidase S8 family.

Its function is as follows. Involved in the generation of beta- and alpha-amylases from the large amylase precursor. This chain is Intracellular serine protease (isp), found in Paenibacillus polymyxa (Bacillus polymyxa).